Reading from the N-terminus, the 460-residue chain is Notoamide biosynthesis cluster transcriptional coactivator notR (460 aa).

An HTH iclR-type domain is found at 74–145 (LQDLARQVEI…EPMPNYVSHT (72 aa)). Positions 107 to 126 (IQDLADLAGVPDIQLRRVIR) form a DNA-binding region, H-T-H motif. The interval 300-320 (TRDFTPQPESSPRPGSASSRV) is disordered.

The protein localises to the nucleus. Its function is as follows. Transcription factor that probably regulates the expression of the gene cluster that mediates the biosynthesis of notoamide, a fungal indole alkaloid that belongs to a family of natural products containing a characteristic bicyclo[2.2.2]diazaoctane core. The polypeptide is Notoamide biosynthesis cluster transcriptional coactivator notR (Aspergillus sp. (strain MF297-2)).